The following is a 129-amino-acid chain: Small ribosomal subunit protein uS9 (129 aa).

The tract at residues 97 to 129 (LKAQGFLTRDPRKKERKKYGRKKARKSFQFSKR) is disordered. Over residues 110 to 129 (KERKKYGRKKARKSFQFSKR) the composition is skewed to basic residues.

Belongs to the universal ribosomal protein uS9 family.

This Chlamydia trachomatis serovar A (strain ATCC VR-571B / DSM 19440 / HAR-13) protein is Small ribosomal subunit protein uS9.